The sequence spans 570 residues: RNA polymerase I termination factor (570 aa).

The segment covering 1 to 16 (MDSVSNLKSTNFQNNN) has biased composition (polar residues). 3 disordered regions span residues 1–21 (MDSV…PKES), 37–68 (HIKK…DMDW), and 100–138 (SSMR…AKIK). The span at 37–56 (HIKKTKKKLKKQKKRKHGSK) shows a compositional bias: basic residues. At threonine 64 the chain carries Phosphothreonine. Basic residues predominate over residues 108–137 (RSCHKKSSNSRSERKKHRKRKSSKERKAKI). One can recognise a Myb-like 1 domain in the interval 273-339 (KFTPSEENAL…SIYKHIRRKY (67 aa)). Positions 340–391 (HIFEQRGKWTPEEDQELARLCLEKEGHWTEVGKLLGRMPEDCRDRWRNYMKC) constitute an HTH myb-type domain. Residues 367–389 (WTEVGKLLGRMPEDCRDRWRNYM) constitute a DNA-binding region (H-T-H motif). Myb-like domains lie at 392-486 (GSKR…NKLV) and 493-549 (SMLS…MREK).

Interacts with FOB1. Interacts with the RENT complex subunits NET1 and SIR2.

It localises to the nucleus. The protein localises to the nucleolus. In terms of biological role, DNA-binding protein that recognizes sequence-specific replication termini (Ter sites) within rDNA. Binds to rDNA terminator elements and mediates efficient RNA polymerase I transcription termination. Required for rDNA silencing at the non-transcribed spacer 1 (NTS1). Promotes the association of SIR2 with NTS1 and contributes to maintenance of rDNA stability. The chain is RNA polymerase I termination factor from Saccharomyces cerevisiae (strain ATCC 204508 / S288c) (Baker's yeast).